We begin with the raw amino-acid sequence, 258 residues long: Undecaprenyl-diphosphatase (258 aa).

A run of 8 helical transmembrane segments spans residues M1 to V21, L42 to F62, F69 to A89, F96 to V116, V135 to T155, E173 to Y193, I211 to L231, and F237 to I257.

It belongs to the UppP family.

It localises to the cell inner membrane. It carries out the reaction di-trans,octa-cis-undecaprenyl diphosphate + H2O = di-trans,octa-cis-undecaprenyl phosphate + phosphate + H(+). Catalyzes the dephosphorylation of undecaprenyl diphosphate (UPP). Confers resistance to bacitracin. The protein is Undecaprenyl-diphosphatase of Campylobacter fetus subsp. fetus (strain 82-40).